The chain runs to 339 residues: N-acetyl-gamma-glutamyl-phosphate reductase 1 (339 aa).

Cys149 is a catalytic residue.

This sequence belongs to the NAGSA dehydrogenase family. Type 1 subfamily.

It is found in the cytoplasm. The enzyme catalyses N-acetyl-L-glutamate 5-semialdehyde + phosphate + NADP(+) = N-acetyl-L-glutamyl 5-phosphate + NADPH + H(+). It participates in amino-acid biosynthesis; L-arginine biosynthesis; N(2)-acetyl-L-ornithine from L-glutamate: step 3/4. Its function is as follows. Catalyzes the NADPH-dependent reduction of N-acetyl-5-glutamyl phosphate to yield N-acetyl-L-glutamate 5-semialdehyde. The sequence is that of N-acetyl-gamma-glutamyl-phosphate reductase 1 from Lactiplantibacillus plantarum (strain ATCC BAA-793 / NCIMB 8826 / WCFS1) (Lactobacillus plantarum).